A 664-amino-acid chain; its full sequence is uncharacterized protein (664 aa).

Residues 1-25 form the signal peptide; it reads MSWKRYLKWVSFAIIPLLFANTSIK. The helical transmembrane segment at 625–645 threads the bilayer; it reads IIVYLIIGFSVLVLFITVFIY.

Belongs to the MG414/MG415 family.

It is found in the cell membrane. This is an uncharacterized protein from Mycoplasma genitalium (strain ATCC 33530 / DSM 19775 / NCTC 10195 / G37) (Mycoplasmoides genitalium).